Here is a 104-residue protein sequence, read N- to C-terminus: Large ribosomal subunit protein bL21c (104 aa).

The protein belongs to the bacterial ribosomal protein bL21 family. As to quaternary structure, part of the 50S ribosomal subunit.

Its subcellular location is the plastid. It localises to the chloroplast. In terms of biological role, this protein binds to 23S rRNA. The chain is Large ribosomal subunit protein bL21c from Porphyra purpurea (Red seaweed).